The chain runs to 92 residues: MANTASAEKRNRQAQKRRARNVQVRTGVKSAVKKLREAIAKGDPATTQAALKSAEKTIGKAASKGVLHRNAASRKISRLAKAAAKPAAAAAK.

The segment at 1-28 (MANTASAEKRNRQAQKRRARNVQVRTGV) is disordered.

This sequence belongs to the bacterial ribosomal protein bS20 family.

Its function is as follows. Binds directly to 16S ribosomal RNA. The protein is Small ribosomal subunit protein bS20 of Anaeromyxobacter dehalogenans (strain 2CP-C).